The sequence spans 354 residues: MEQKQRRFTKNIFVLDITAKTLCGAIAKLSSQPYCQIKIGRVVAFKPVKNPEPKGYVLNVPGPGAYRIQDGQDIISLMLTPHGVEATTERWEEWKFEGVSVTPMATRVQYNGVMVDAEIKYCKGMGIVQPYMRNDFDRNEMPDLPGVMRSNYDIRELRQKIKNERESAPRLQVQSVASREESRWMDDDEAKVDNEAKEIIPGTSGLEKLREARSNVFKEVETVINWNLDERDEEDRDERGDEEQVKTLSDDDDQGEDASDDEHPKTHITKEYIEKVAKQIKLKDERFMSLSSAMPQASGGFDRMIVTKKLKWQNVPLYCFDESLKRYELQCVGACERVAFVSKDMSLIILPVGV.

2 disordered regions span residues asparagine 163 to alanine 196 and aspartate 229 to threonine 269. Basic and acidic residues-rich tracts occupy residues serine 178–alanine 196 and aspartate 237–serine 249. The span at aspartate 250–aspartate 260 shows a compositional bias: acidic residues.

In terms of biological role, single-stranded RNA-binding protein. In Bluetongue virus 17 (isolate USA) (BTV 17), this protein is Non-structural protein NS2 (Segment-8).